The sequence spans 613 residues: MPKYRSATTTHGRNMAGARALWRATGVKEEDFGKPIIAVVNSFTQFVPGHVHLKDLGQLVAREIEAAGGIAKEFNTIAVDDGIAMGHGGMLYSLPSRELIADSVEYMVNAHCADAMVCISNCDKITPGMLMAAMRLNIPAIFVSGGPMEAGKTKLSDQIIKLDLVDAMMQGADPKVSDAQSEQIERSACPTCGSCSGMFTANSMNCLTEALGLSQPGNGSLLATHADRKQLFLTAGQRIVELTKRYYEQDDASVLPRNIANKAAFENAIALDIAMGGSTNTVLHLLAAAQEGEVEFDMTDIDRMSRQVPHLCKVAPSTQKYHMEDVHRAGGVMGILGELQRAGLLKDQTRTVLGISLQEQLAQYDVKQTQDPAVHTMFRAGPAGIRTTQAFSQDCRWDTLDDDRQEGCIRDKAHAFSQDGGLAVLKGNLAIDGCIVKTAGVDESILKFRGPAVVYESQEDAVNGILGGQVKAGDVVVIRYEGPKGGPGMQEMLYPTTYLKSMGLGKQCALLTDGRFSGGTSGLSIGHASPEAANGGTIGLVRSGDSIAIDIPNRSITLEVSESELAARRAEQDKLGWKPVDRQRTVSLALKAYASMATSADKGAVRDKSKLEG.

Mg(2+) is bound at residue D81. [2Fe-2S] cluster is bound at residue C122. 2 residues coordinate Mg(2+): D123 and K124. K124 is modified (N6-carboxylysine). C195 is a [2Fe-2S] cluster binding site. Residue E491 coordinates Mg(2+). S517 acts as the Proton acceptor in catalysis.

Belongs to the IlvD/Edd family. Homodimer. It depends on [2Fe-2S] cluster as a cofactor. The cofactor is Mg(2+).

The catalysed reaction is (2R)-2,3-dihydroxy-3-methylbutanoate = 3-methyl-2-oxobutanoate + H2O. It catalyses the reaction (2R,3R)-2,3-dihydroxy-3-methylpentanoate = (S)-3-methyl-2-oxopentanoate + H2O. Its pathway is amino-acid biosynthesis; L-isoleucine biosynthesis; L-isoleucine from 2-oxobutanoate: step 3/4. It participates in amino-acid biosynthesis; L-valine biosynthesis; L-valine from pyruvate: step 3/4. Its function is as follows. Functions in the biosynthesis of branched-chain amino acids. Catalyzes the dehydration of (2R,3R)-2,3-dihydroxy-3-methylpentanoate (2,3-dihydroxy-3-methylvalerate) into 2-oxo-3-methylpentanoate (2-oxo-3-methylvalerate) and of (2R)-2,3-dihydroxy-3-methylbutanoate (2,3-dihydroxyisovalerate) into 2-oxo-3-methylbutanoate (2-oxoisovalerate), the penultimate precursor to L-isoleucine and L-valine, respectively. This Vibrio cholerae serotype O1 (strain ATCC 39541 / Classical Ogawa 395 / O395) protein is Dihydroxy-acid dehydratase.